A 120-amino-acid polypeptide reads, in one-letter code: Aspartate 1-decarboxylase (120 aa).

Serine 25 (schiff-base intermediate with substrate; via pyruvic acid) is an active-site residue. A Pyruvic acid (Ser) modification is found at serine 25. A substrate-binding site is contributed by threonine 57. The active-site Proton donor is the tyrosine 58. Residue glycine 73–alanine 75 participates in substrate binding.

This sequence belongs to the PanD family. Heterooctamer of four alpha and four beta subunits. The cofactor is pyruvate. In terms of processing, is synthesized initially as an inactive proenzyme, which is activated by self-cleavage at a specific serine bond to produce a beta-subunit with a hydroxyl group at its C-terminus and an alpha-subunit with a pyruvoyl group at its N-terminus.

The protein localises to the cytoplasm. It catalyses the reaction L-aspartate + H(+) = beta-alanine + CO2. The protein operates within cofactor biosynthesis; (R)-pantothenate biosynthesis; beta-alanine from L-aspartate: step 1/1. In terms of biological role, catalyzes the pyruvoyl-dependent decarboxylation of aspartate to produce beta-alanine. The chain is Aspartate 1-decarboxylase from Cupriavidus necator (strain ATCC 17699 / DSM 428 / KCTC 22496 / NCIMB 10442 / H16 / Stanier 337) (Ralstonia eutropha).